A 54-amino-acid chain; its full sequence is Sperm protamine P3 (54 aa).

The interval 1–54 (RRRRRRGKGKGGKKKKGKKRRRRGRKGKGKGKKKGKRKGKRGGKRRRRRRKGKK) is disordered.

Gonads.

It is found in the nucleus. The protein resides in the chromosome. Functionally, protamines substitute for histones in the chromatin of sperm during the haploid phase of spermatogenesis. They compact sperm DNA into a highly condensed, stable and inactive complex. This is Sperm protamine P3 from Bolinus brandaris (Purple dye murex).